Reading from the N-terminus, the 492-residue chain is N-succinylglutamate 5-semialdehyde dehydrogenase (492 aa).

220 to 225 (GSSTTG) provides a ligand contact to NAD(+). Active-site residues include E243 and C277.

This sequence belongs to the aldehyde dehydrogenase family. AstD subfamily.

It carries out the reaction N-succinyl-L-glutamate 5-semialdehyde + NAD(+) + H2O = N-succinyl-L-glutamate + NADH + 2 H(+). It functions in the pathway amino-acid degradation; L-arginine degradation via AST pathway; L-glutamate and succinate from L-arginine: step 4/5. Its function is as follows. Catalyzes the NAD-dependent reduction of succinylglutamate semialdehyde into succinylglutamate. The polypeptide is N-succinylglutamate 5-semialdehyde dehydrogenase (Klebsiella pneumoniae subsp. pneumoniae (strain ATCC 700721 / MGH 78578)).